We begin with the raw amino-acid sequence, 252 residues long: Flagellar L-ring protein (252 aa).

Residues 1 to 25 form the signal peptide; that stretch reads MSKSVPLQRIVLVAALMATGGLAGG. Residue cysteine 26 is the site of N-palmitoyl cysteine attachment. Cysteine 26 carries the S-diacylglycerol cysteine lipid modification.

This sequence belongs to the FlgH family. The basal body constitutes a major portion of the flagellar organelle and consists of four rings (L,P,S, and M) mounted on a central rod.

The protein resides in the cell outer membrane. Its subcellular location is the bacterial flagellum basal body. In terms of biological role, assembles around the rod to form the L-ring and probably protects the motor/basal body from shearing forces during rotation. This chain is Flagellar L-ring protein, found in Rhodopseudomonas palustris (strain ATCC BAA-98 / CGA009).